The sequence spans 597 residues: Probable translation initiation factor IF-2 (597 aa).

One can recognise a tr-type G domain in the interval 4-221; it reads IRQPIIAVLG…LISGLAQKYL (218 aa). The interval 13–20 is G1; that stretch reads GHVDHGKT. Residue 13–20 participates in GTP binding; the sequence is GHVDHGKT. The segment at 38-42 is G2; sequence GITQH. The tract at residues 77–80 is G3; it reads DTPG. Residues 77–81 and 131–134 each bind GTP; these read DTPGH and NKID. A G4 region spans residues 131–134; it reads NKID. Residues 199 to 201 form a G5 region; that stretch reads SAK.

It belongs to the TRAFAC class translation factor GTPase superfamily. Classic translation factor GTPase family. IF-2 subfamily.

Functionally, function in general translation initiation by promoting the binding of the formylmethionine-tRNA to ribosomes. Seems to function along with eIF-2. The sequence is that of Probable translation initiation factor IF-2 from Thermococcus sibiricus (strain DSM 12597 / MM 739).